Reading from the N-terminus, the 329-residue chain is G-protein coupled receptor 3 (329 aa).

Over 1–43 (MMWGAGRSMAWFSAGSGSVNVSIDPAEEPTGPATLLPSPRAWD) the chain is Extracellular. N-linked (GlcNAc...) asparagine glycosylation occurs at asparagine 20. A helical membrane pass occupies residues 44–64 (VVLCISGTLVSCENALVVAII). Residues 65 to 73 (VGTPAFRAP) are Cytoplasmic-facing. The chain crosses the membrane as a helical span at residues 74-94 (MFLLVGSLAVADLLAGLGLVL). Residues 95 to 108 (HFAADFCIGSPEMS) are Extracellular-facing. The chain crosses the membrane as a helical span at residues 109–129 (LVLVGVLATAFTASIGSLLAI). The Cytoplasmic portion of the chain corresponds to 130 to 153 (TVDRYLSLYNALTYYSETTVTRTY). A helical transmembrane segment spans residues 154–174 (VMLALVWVGALGLGLVPVLAW). At 175 to 192 (NCRDGLTTCGVVYPLSKN) the chain is on the extracellular side. Residues 193–213 (HLVVLAIVFFMVFGIMLQLYA) traverse the membrane as a helical segment. At 214-247 (QICRIVCRHAQQIALQRHLLPASHYVATRKGIAT) the chain is on the cytoplasmic side. Residues 248-268 (LAVVLGAFAACWLPFTVYCLL) traverse the membrane as a helical segment. Over 269-277 (GDANSPPLY) the chain is Extracellular. A helical transmembrane segment spans residues 278-298 (TYLTLLPATYNSMINPVIYAF). Topologically, residues 299-329 (RNQDVQKVLWAICCCCSTSKIPFRSRSPSDV) are cytoplasmic. Cysteine 312 is lipidated: S-palmitoyl cysteine. Residues serine 323, serine 325, and serine 327 each carry the phosphoserine modification.

Belongs to the G-protein coupled receptor 1 family. As to expression, abundantly expressed in granule neurons at all development stages. Enriched in the longest tips of neurites during differentiation of hippocampal neurons.

It localises to the cell membrane. Constitutively active G-protein coupled receptor that maintains high 3'-5'-cyclic adenosine monophosphate (cAMP) levels that a plays a role in serveral processes including meiotic arrest in oocytes or neuronal development via activation of numerous intracellular signaling pathways. Acts as an essential activator of thermogenic adipocytes and drives thermogenesis via its intrinsic G(s)-coupling activity without the requirement of a ligand. Has a potential role in modulating a number of brain functions, including behavioral responses to stress, amyloid-beta peptide generation in neurons. Stimulates neurite outgrowth in cerebellar granular neurons modulated via PKA, ERK, and most strongly PI3K-mediated signaling pathways. The protein is G-protein coupled receptor 3 (Gpr3) of Rattus norvegicus (Rat).